The chain runs to 1103 residues: MADLVTYSNADHNLEQALITLKKGTQLLKYGRKGKPKFYPFRLSSDEKSLIWISSSGEKRLKLASVSKIVPGQRTAVFQRYLRPEKDYLSFSLLYNGKKKSLDLICKDKVEAEIWIGGLKTLISTGQGGRSKIDGWSGGGLSVDASRELTSSSPSSSSASASRGHSSPGTPFNIDPITSPKSAEPEVPPTDSEKSHVALDNKNMQTKVSGSDGFRVSVSSAQSSSSHGSAADDSDALGDVYIWGEVICDNVVKVGIDKNASYLTTRTDVLVPKPLESNIVLDVHQIACGVRHAAFVTRQGEIFTWGEESGGRLGHGIGKDVFHPRLVESLTATSSVDFVACGEFHTCAVTLAGELYTWGDGTHNVGLLGHGSDISHWIPKRIAGSLEGLHVASVSCGPWHTALITSYGRLFTFGDGTFGVLGHGDKETVQYPREVESLSGLRTIAVSCGVWHTAAVVEIIVTQSNSSSVSSGKLFTWGDGDKNRLGHGDKDPRLKPTCVPALIDYNFHKIACGHSLTVGLTTSGQVFTMGSTVYGQLGNLQTDGKLPCLVEDKLASEFVEEISCGAYHVAALTSRNEVYTWGKGANGRLGHGDLEDRKVPTIVEALKDRHVKYIACGSNYTAAICLHKWVSGAEQSQCSTCRLAFGFTRKRHNCYNCGLVHCHSCSSKKAFRAALAPSAGRLYRVCDSCYVKLSKVSEINDTNRRNSAVPRLSGENRDRLDKSEIRLAKFGTSNMDLIKQLDSKAAKQGKKTDTFSLGRNSQLPSLLQLKDAVQSNIGDMRRATPKLAQAPSGISSRSVSPFSRRSSPPRSATPMPSTSGLYFPVGIADNMKKTNEILNQEIVKLRTQVDSLTQKCEFQEVELQNSVKKTQEALALAEEESAKSRAAKEAIKSLIAQLKDVAEKLPPGESVKLACLQNGLDQNGFHFPEENGFHPSRSESMTSSISSVAPFDFAFANASWSNLQSPKQTPRASERNSNAYPADPRLSSSGSVISERIEPFQFQNNSDNGSSQTGVNNTNQVEAEWIEQYEPGVYITLVALHDGTRDLRRVRFSRRRFGEHQAETWWSENREKVYEKYNVRVSEKSTASQTHRDRDEEEEDIPH.

The region spanning 22 to 123 (KKGTQLLKYG…IWIGGLKTLI (102 aa)) is the PH domain. Residues 144–233 (DASRELTSSS…SSSHGSAADD (90 aa)) form a disordered region. Low complexity-rich tracts occupy residues 151–169 (SSSP…SSPG) and 217–231 (SVSS…GSAA). RCC1 repeat units follow at residues 237–298 (LGDV…FVTR), 299–351 (QGEI…AVTL), 353–406 (GELY…LITS), 407–458 (YGRL…AVVE), 471–522 (SGKL…GLTT), 524–574 (GQVF…ALTS), and 575–626 (RNEV…AICL). The FYVE-type zinc finger occupies 632 to 694 (GAEQSQCSTC…VCDSCYVKLS (63 aa)). Residues Cys-638, Cys-641, Cys-654, Cys-657, Cys-662, Cys-665, Cys-686, and Cys-689 each contribute to the Zn(2+) site. The disordered stretch occupies residues 783-818 (ATPKLAQAPSGISSRSVSPFSRRSSPPRSATPMPST). Over residues 791-818 (PSGISSRSVSPFSRRSSPPRSATPMPST) the composition is skewed to low complexity. A coiled-coil region spans residues 828–904 (ADNMKKTNEI…IAQLKDVAEK (77 aa)). Polar residues predominate over residues 962–979 (NLQSPKQTPRASERNSNA). Residues 962-988 (NLQSPKQTPRASERNSNAYPADPRLSS) are disordered. The 56-residue stretch at 1023 to 1078 (AEWIEQYEPGVYITLVALHDGTRDLRRVRFSRRRFGEHQAETWWSENREKVYEKYN) folds into the BRX domain. Residues 1079–1103 (VRVSEKSTASQTHRDRDEEEEDIPH) are disordered.

In terms of tissue distribution, mostly expressed in flowers, and, to a lower extent, in stems, leaves, siliques, seeds.

In terms of biological role, binds to phosphatidic acid and to phosphoinositides such as PtdIns3P, PtdIns(3,4)P(2), PtdIns(3,4,5)P(3) and PtdIns(4,5)P(2). Catalyzes guanine nucleotide exchange on specific Rab proteins. This Arabidopsis thaliana (Mouse-ear cress) protein is PH, RCC1 and FYVE domains-containing protein 1.